A 292-amino-acid chain; its full sequence is GTP cyclohydrolase FolE2 (292 aa).

This sequence belongs to the GTP cyclohydrolase IV family.

The enzyme catalyses GTP + H2O = 7,8-dihydroneopterin 3'-triphosphate + formate + H(+). Its pathway is cofactor biosynthesis; 7,8-dihydroneopterin triphosphate biosynthesis; 7,8-dihydroneopterin triphosphate from GTP: step 1/1. Its function is as follows. Converts GTP to 7,8-dihydroneopterin triphosphate. This chain is GTP cyclohydrolase FolE2, found in Macrococcus caseolyticus (strain JCSC5402) (Macrococcoides caseolyticum).